The primary structure comprises 300 residues: Telomere repeat-binding factor 1 (300 aa).

Residues 1 to 58 (MGAPKQKWTQEEESALKSGVIKHGPGKWRTILKDPEFSGVLYLRSNVDLKDKWRNMSV) enclose the HTH myb-type domain. The H-T-H motif DNA-binding region spans 28-57 (WRTILKDPEFSGVLYLRSNVDLKDKWRNMS). Disordered stretches follow at residues 93–119 (LQSD…RPNV) and 185–213 (NSTP…PSPK). One can recognise an H15 domain in the interval 117 to 185 (PNVRLDSLIM…KVKRKYRIPN (69 aa)). The stretch at 241–290 (EAAAVAAQAVAEAEAAMAEAEEAAKEAEAAEAEAEAAQAFAEEASKTLKG) forms a coiled coil.

This sequence belongs to the histone H1/H5 family. SMH subfamily. In terms of assembly, forms a homodimer and heterodimers with TRB2 or TRB3. Interacts with POT1b, TRB2 and TRB3 through its H15 domain.

It is found in the nucleus. The protein resides in the nucleolus. Its subcellular location is the chromosome. In terms of biological role, binds preferentially double-stranded telomeric repeats. The sequence is that of Telomere repeat-binding factor 1 (TRB1) from Arabidopsis thaliana (Mouse-ear cress).